The following is a 79-amino-acid chain: MLKLRLKRSGRKKQPSYRLVVMENTTRRDGRPVEQVGYYNTITKESYFDVIKIKKWLNYGAKPTQTVLNLLKKAKIIDQ.

The protein belongs to the bacterial ribosomal protein bS16 family.

The protein localises to the plastid. It localises to the chloroplast. This Trieres chinensis (Marine centric diatom) protein is Small ribosomal subunit protein bS16c.